A 342-amino-acid chain; its full sequence is C-X-C chemokine receptor type 6 (342 aa).

Topologically, residues 1-32 (MAEHDYHEDYGFNSFNDSSQEEHQDFLQFSKV) are extracellular. N-linked (GlcNAc...) asparagine glycosylation is present at asparagine 16. Residues 33-59 (FLPCMYLVVFVCGLVGNSLVLVISIFY) form a helical membrane-spanning segment. The Cytoplasmic segment spans residues 60–68 (HKLQSLTDV). A helical transmembrane segment spans residues 69–89 (FLVNLPLADLVFVCTLPFWAY). Topologically, residues 90–103 (AGIHEWVFGQVMCK) are extracellular. A disulfide bridge connects residues cysteine 102 and cysteine 180. A helical membrane pass occupies residues 104 to 125 (SLLGIYTINFYTSMLILTCITV). Topologically, residues 126–143 (DRFIVVVKATKAYNQQAK) are cytoplasmic. A helical transmembrane segment spans residues 144–164 (RMTWGKVTSLLIWVISLLVSL). Residues 165–187 (PQIIYGNVFNLDKLICGYHDEAI) are Extracellular-facing. The chain crosses the membrane as a helical span at residues 188-215 (STVVLATQMTLGFFLPLLTMIVCYSVII). The Cytoplasmic segment spans residues 216–231 (KTLLHAGGFQKHRSLK). Residues 232 to 259 (IIFLVMAVFLLTQMPFNLMKLIRSTHWE) traverse the membrane as a helical segment. Topologically, residues 260-275 (YYAMTSFHYTIMVTEA) are extracellular. Residues 276 to 293 (IAYLRACLNPVLYAFVSL) traverse the membrane as a helical segment. Residues 294-342 (KFRKNFWKLVKDIGCLPYLGVSHQWKSSEDNSKTFSASHNVEATSMFQL) are Cytoplasmic-facing.

Belongs to the G-protein coupled receptor 1 family.

It is found in the cell membrane. In terms of biological role, receptor for the C-X-C chemokine CXCL16. Used as a coreceptor by SIVs and by strains of HIV-2 and m-tropic HIV-1. This is C-X-C chemokine receptor type 6 (CXCR6) from Pan troglodytes (Chimpanzee).